The sequence spans 393 residues: Argininosuccinate synthase (393 aa).

Residues 7 to 15 (AYSGGLDTS) and alanine 34 contribute to the ATP site. L-citrulline contacts are provided by tyrosine 85 and serine 90. Glycine 115 is a binding site for ATP. L-aspartate-binding residues include threonine 117, asparagine 121, and aspartate 122. An L-citrulline-binding site is contributed by asparagine 121. Arginine 125, serine 176, serine 185, glutamate 261, and tyrosine 273 together coordinate L-citrulline.

Belongs to the argininosuccinate synthase family. Type 1 subfamily. In terms of assembly, homotetramer.

It is found in the cytoplasm. The catalysed reaction is L-citrulline + L-aspartate + ATP = 2-(N(omega)-L-arginino)succinate + AMP + diphosphate + H(+). It participates in amino-acid biosynthesis; L-arginine biosynthesis; L-arginine from L-ornithine and carbamoyl phosphate: step 2/3. This Ehrlichia chaffeensis (strain ATCC CRL-10679 / Arkansas) protein is Argininosuccinate synthase.